The sequence spans 276 residues: NH(3)-dependent NAD(+) synthetase (276 aa).

Gly-43–Ser-50 lines the ATP pocket. Residue Asp-49 coordinates Mg(2+). Arg-146 lines the deamido-NAD(+) pocket. Position 166 (Thr-166) interacts with ATP. Mg(2+) is bound at residue Glu-171. Residues Lys-179 and Asp-186 each contribute to the deamido-NAD(+) site. Residues Lys-195 and Thr-217 each contribute to the ATP site. A deamido-NAD(+)-binding site is contributed by His-266 to Lys-267.

It belongs to the NAD synthetase family. In terms of assembly, homodimer.

It catalyses the reaction deamido-NAD(+) + NH4(+) + ATP = AMP + diphosphate + NAD(+) + H(+). The protein operates within cofactor biosynthesis; NAD(+) biosynthesis; NAD(+) from deamido-NAD(+) (ammonia route): step 1/1. Its function is as follows. Catalyzes the ATP-dependent amidation of deamido-NAD to form NAD. Uses ammonia as a nitrogen source. This Shewanella piezotolerans (strain WP3 / JCM 13877) protein is NH(3)-dependent NAD(+) synthetase.